We begin with the raw amino-acid sequence, 256 residues long: Enolase-phosphatase E1 (256 aa).

Mg(2+) contacts are provided by aspartate 14 and glutamate 16. Residues 142-143 (SS) and lysine 176 contribute to the substrate site. Aspartate 201 lines the Mg(2+) pocket.

Belongs to the HAD-like hydrolase superfamily. MasA/MtnC family. Monomer. Mg(2+) is required as a cofactor.

It is found in the cytoplasm. The protein resides in the nucleus. The catalysed reaction is 5-methylsulfanyl-2,3-dioxopentyl phosphate + H2O = 1,2-dihydroxy-5-(methylsulfanyl)pent-1-en-3-one + phosphate. Its pathway is amino-acid biosynthesis; L-methionine biosynthesis via salvage pathway; L-methionine from S-methyl-5-thio-alpha-D-ribose 1-phosphate: step 3/6. It participates in amino-acid biosynthesis; L-methionine biosynthesis via salvage pathway; L-methionine from S-methyl-5-thio-alpha-D-ribose 1-phosphate: step 4/6. Bifunctional enzyme that catalyzes the enolization of 2,3-diketo-5-methylthiopentyl-1-phosphate (DK-MTP-1-P) into the intermediate 2-hydroxy-3-keto-5-methylthiopentenyl-1-phosphate (HK-MTPenyl-1-P), which is then dephosphorylated to form the acireductone 1,2-dihydroxy-3-keto-5-methylthiopentene (DHK-MTPene). In Drosophila simulans (Fruit fly), this protein is Enolase-phosphatase E1.